Here is a 285-residue protein sequence, read N- to C-terminus: Nucleotide-binding protein Cphy_0331 (285 aa).

8–15 (GMSGAGKS) contributes to the ATP binding site. 59-62 (DIRS) contributes to the GTP binding site.

This sequence belongs to the RapZ-like family.

Displays ATPase and GTPase activities. The chain is Nucleotide-binding protein Cphy_0331 from Lachnoclostridium phytofermentans (strain ATCC 700394 / DSM 18823 / ISDg) (Clostridium phytofermentans).